We begin with the raw amino-acid sequence, 238 residues long: MVNTLANELREGTTKSHSMAENVSFVKSFLGGVVDKKSYRKLVANLYFVYCAIEEELFSNKNHPAIKPIYFTELNRKASLSEDLNYYYGSDWLDFIEPSPATKIYVDRIHTIGHKQPELLVAHAYTRYLGDLSGGQILKKIARGAMNLSDSGGTKFYDFDQIKDDKLFKDQYRAALDMIPLSDVQIQNIVSEANISFTLNMKMFEELNSSSLKIITMLIANTIQKFKAKYKSTLAMVD.

His17 is a binding site for heme b.

It belongs to the heme oxygenase family.

The protein resides in the plastid. Its subcellular location is the chloroplast. The enzyme catalyses heme b + 3 reduced [NADPH--hemoprotein reductase] + 3 O2 = biliverdin IXalpha + CO + Fe(2+) + 3 oxidized [NADPH--hemoprotein reductase] + 3 H2O + H(+). Its function is as follows. Catalyzes the opening of the heme ring with the release of iron. Key enzyme in the synthesis of the chromophoric part of the photosynthetic antennae. This is Heme oxygenase (pbsA) from Pyropia yezoensis (Susabi-nori).